A 222-amino-acid chain; its full sequence is UPF0502 protein SO_1867 (222 aa).

The segment covering 169 to 193 has biased composition (polar residues); that stretch reads EQVSATSLSADSPSADSNSLNAQDR. The disordered stretch occupies residues 169-195; it reads EQVSATSLSADSPSADSNSLNAQDRQQ.

It belongs to the UPF0502 family.

The polypeptide is UPF0502 protein SO_1867 (Shewanella oneidensis (strain ATCC 700550 / JCM 31522 / CIP 106686 / LMG 19005 / NCIMB 14063 / MR-1)).